A 386-amino-acid chain; its full sequence is Alpha-D-kanosaminyltransferase (386 aa).

It belongs to the glycosyltransferase group 1 family.

It carries out the reaction 2'-deamino-2'-hydroxyneamine + UDP-alpha-D-kanosamine = kanamycin A + UDP + H(+). The enzyme catalyses neamine + UDP-alpha-D-kanosamine = kanamycin B + UDP + H(+). The catalysed reaction is paromamine + UDP-alpha-D-kanosamine = kanamycin C + UDP + H(+). It catalyses the reaction 2'-deamino-2'-hydroxyparomamine + UDP-alpha-D-kanosamine = kanamycin X + UDP + H(+). It functions in the pathway antibiotic biosynthesis; kanamycin biosynthesis. Glycosyltransferase involved in the biosynthesis of kanamycins by catalyzing the transfer of the hexose kanosamine from UDP-alpha-D-kanosamine to disaccharide precursors. Can also use UDP-alpha-D-glucose as sugar donor with much lower efficiency. The polypeptide is Alpha-D-kanosaminyltransferase (kanE) (Streptomyces kanamyceticus).